Reading from the N-terminus, the 168-residue chain is tRNA-splicing endonuclease (168 aa).

Catalysis depends on residues tyrosine 107, histidine 114, and lysine 145.

It belongs to the tRNA-intron endonuclease family. Archaeal short subfamily. In terms of assembly, homotetramer; although the tetramer contains four active sites, only two participate in the cleavage. Therefore, it should be considered as a dimer of dimers.

The catalysed reaction is pretRNA = a 3'-half-tRNA molecule with a 5'-OH end + a 5'-half-tRNA molecule with a 2',3'-cyclic phosphate end + an intron with a 2',3'-cyclic phosphate and a 5'-hydroxyl terminus.. Endonuclease that removes tRNA introns. Cleaves pre-tRNA at the 5'- and 3'-splice sites to release the intron. The products are an intron and two tRNA half-molecules bearing 2',3' cyclic phosphate and 5'-OH termini. Recognizes a pseudosymmetric substrate in which 2 bulged loops of 3 bases are separated by a stem of 4 bp. This chain is tRNA-splicing endonuclease, found in Thermococcus kodakarensis (strain ATCC BAA-918 / JCM 12380 / KOD1) (Pyrococcus kodakaraensis (strain KOD1)).